A 202-amino-acid chain; its full sequence is Holliday junction branch migration complex subunit RuvA (202 aa).

The tract at residues 1–63 (MIEYLKGAIV…EDAHLLYGFS (63 aa)) is domain I. The domain II stretch occupies residues 64–142 (TKEERTLFGQ…LETSSDEILS (79 aa)). The flexible linker stretch occupies residues 143 to 153 (ARTAVGDAALN). Residues 153-202 (NTIASGEEAISALKMLGFADPAIRKAVKSILSEDSSLAVEDIIKRALRML) are domain III.

Belongs to the RuvA family. As to quaternary structure, homotetramer. Forms an RuvA(8)-RuvB(12)-Holliday junction (HJ) complex. HJ DNA is sandwiched between 2 RuvA tetramers; dsDNA enters through RuvA and exits via RuvB. An RuvB hexamer assembles on each DNA strand where it exits the tetramer. Each RuvB hexamer is contacted by two RuvA subunits (via domain III) on 2 adjacent RuvB subunits; this complex drives branch migration. In the full resolvosome a probable DNA-RuvA(4)-RuvB(12)-RuvC(2) complex forms which resolves the HJ.

It localises to the cytoplasm. Its function is as follows. The RuvA-RuvB-RuvC complex processes Holliday junction (HJ) DNA during genetic recombination and DNA repair, while the RuvA-RuvB complex plays an important role in the rescue of blocked DNA replication forks via replication fork reversal (RFR). RuvA specifically binds to HJ cruciform DNA, conferring on it an open structure. The RuvB hexamer acts as an ATP-dependent pump, pulling dsDNA into and through the RuvAB complex. HJ branch migration allows RuvC to scan DNA until it finds its consensus sequence, where it cleaves and resolves the cruciform DNA. The chain is Holliday junction branch migration complex subunit RuvA from Porphyromonas gingivalis (strain ATCC BAA-308 / W83).